We begin with the raw amino-acid sequence, 468 residues long: Siroheme synthase 3 (468 aa).

Residues 1-204 are precorrin-2 dehydrogenase /sirohydrochlorin ferrochelatase; sequence MDYLPIFCRL…GDSASANQLA (204 aa). NAD(+) is bound by residues 22 to 23 and 43 to 44; these read EV and PE. Residue S128 is modified to Phosphoserine. The interval 216 to 468 is uroporphyrinogen-III C-methyltransferase; sequence GEVVLVGAGP…GAADAALASA (253 aa). S-adenosyl-L-methionine is bound at residue P225. D248 serves as the catalytic Proton acceptor. K270 functions as the Proton donor in the catalytic mechanism. S-adenosyl-L-methionine is bound by residues 301–303, I306, 331–332, M383, and G412; these read GGD and TA.

The protein in the N-terminal section; belongs to the precorrin-2 dehydrogenase / sirohydrochlorin ferrochelatase family. In the C-terminal section; belongs to the precorrin methyltransferase family.

The enzyme catalyses uroporphyrinogen III + 2 S-adenosyl-L-methionine = precorrin-2 + 2 S-adenosyl-L-homocysteine + H(+). The catalysed reaction is precorrin-2 + NAD(+) = sirohydrochlorin + NADH + 2 H(+). It catalyses the reaction siroheme + 2 H(+) = sirohydrochlorin + Fe(2+). It functions in the pathway cofactor biosynthesis; adenosylcobalamin biosynthesis; precorrin-2 from uroporphyrinogen III: step 1/1. The protein operates within cofactor biosynthesis; adenosylcobalamin biosynthesis; sirohydrochlorin from precorrin-2: step 1/1. Its pathway is porphyrin-containing compound metabolism; siroheme biosynthesis; precorrin-2 from uroporphyrinogen III: step 1/1. It participates in porphyrin-containing compound metabolism; siroheme biosynthesis; siroheme from sirohydrochlorin: step 1/1. It functions in the pathway porphyrin-containing compound metabolism; siroheme biosynthesis; sirohydrochlorin from precorrin-2: step 1/1. Functionally, multifunctional enzyme that catalyzes the SAM-dependent methylations of uroporphyrinogen III at position C-2 and C-7 to form precorrin-2 via precorrin-1. Then it catalyzes the NAD-dependent ring dehydrogenation of precorrin-2 to yield sirohydrochlorin. Finally, it catalyzes the ferrochelation of sirohydrochlorin to yield siroheme. The sequence is that of Siroheme synthase 3 from Aeromonas hydrophila subsp. hydrophila (strain ATCC 7966 / DSM 30187 / BCRC 13018 / CCUG 14551 / JCM 1027 / KCTC 2358 / NCIMB 9240 / NCTC 8049).